The following is a 143-amino-acid chain: Large ribosomal subunit protein uL13 (143 aa).

The protein belongs to the universal ribosomal protein uL13 family. Part of the 50S ribosomal subunit.

Functionally, this protein is one of the early assembly proteins of the 50S ribosomal subunit, although it is not seen to bind rRNA by itself. It is important during the early stages of 50S assembly. The sequence is that of Large ribosomal subunit protein uL13 from Neisseria meningitidis serogroup C (strain 053442).